Reading from the N-terminus, the 154-residue chain is Deoxyuridine 5'-triphosphate nucleotidohydrolase (154 aa).

Substrate-binding positions include 64–66 (RSG), Asn77, 81–83 (TVD), and Lys91. Residues 135 to 154 (LADTTRGDGGHGSSGGHASL) are disordered. Residues 144 to 154 (GHGSSGGHASL) show a composition bias toward gly residues.

It belongs to the dUTPase family. In terms of assembly, homotrimer. Mg(2+) serves as cofactor.

The enzyme catalyses dUTP + H2O = dUMP + diphosphate + H(+). It functions in the pathway pyrimidine metabolism; dUMP biosynthesis; dUMP from dCTP (dUTP route): step 2/2. Functionally, this enzyme is involved in nucleotide metabolism: it produces dUMP, the immediate precursor of thymidine nucleotides and it decreases the intracellular concentration of dUTP so that uracil cannot be incorporated into DNA. In Mycolicibacterium vanbaalenii (strain DSM 7251 / JCM 13017 / BCRC 16820 / KCTC 9966 / NRRL B-24157 / PYR-1) (Mycobacterium vanbaalenii), this protein is Deoxyuridine 5'-triphosphate nucleotidohydrolase.